The chain runs to 379 residues: Cytochrome b (379 aa).

4 helical membrane passes run 33–53 (FGSL…FLAM), 77–98 (WLIR…YLHI), 113–133 (WNIG…GYVL), and 178–198 (FFAF…IHLL). His-83 and His-97 together coordinate heme b. Positions 182 and 196 each coordinate heme b. His-201 is an a ubiquinone binding site. The next 4 helical transmembrane spans lie at 226–246 (YKDL…ALFY), 288–308 (LGGV…PILH), 320–340 (ASQL…WIGG), and 347–367 (YIII…VLNP).

This sequence belongs to the cytochrome b family. The cytochrome bc1 complex contains 3 respiratory subunits (MT-CYB, CYC1 and UQCRFS1), 2 core proteins (UQCRC1 and UQCRC2) and probably 6 low-molecular weight proteins. The cofactor is heme b.

Its subcellular location is the mitochondrion inner membrane. Functionally, component of the ubiquinol-cytochrome c reductase complex (complex III or cytochrome b-c1 complex) that is part of the mitochondrial respiratory chain. The b-c1 complex mediates electron transfer from ubiquinol to cytochrome c. Contributes to the generation of a proton gradient across the mitochondrial membrane that is then used for ATP synthesis. This is Cytochrome b (mt-cyb) from Anguilla interioris (Highlands long-finned eel).